The chain runs to 327 residues: MTFYYIRILRLQEKLEESFKYALRVVFTITSDLGEVSYPQDATVRVEALDRQQSHSRITISKQCVSWIGNGHAAETTLYFPASHQQIQLTLHLENQNSIVDSIHINADTVLPVWSEAFSPKSTLPNMVWRYIQGPEKKSPNDGLWFLEQMGNSIAKHLWDAGVVFSKKILSDDWHYSFSNRKDINVLELGSGCGIVGISIASKYPRALVSMTDTEDAIEFMEKNVEKNKSAMSNNITSDILVWGHDIPRKFRRHWDYIVMSDVMYNESSFSDLEASLQELMDKNTKLYIAYKKRHDNEKTFMSNILGWLDLVYEERGPITIYILQKK.

The protein belongs to the UPF0665 family.

The protein localises to the cytoplasm. It localises to the nucleus. The protein is UPF0665 family protein C23C4.06c of Schizosaccharomyces pombe (strain 972 / ATCC 24843) (Fission yeast).